The following is a 1985-amino-acid chain: MSESEVGKDTTPEPSPANGTGPGPEWGLCPGPPTVGTDTSGASGLGTPRRRTQHNKHKTVAVASAQRSPRALFCLTLTNPIRRSCISIVEWKPFDILILLTIFANCVALGVYIPFPEDDSNTANHNLEQVEYVFLVIFTVETVLKIVAYGLVLHPSAYIRNGWNLLDFIIVVVGLFSVLLEQGPGRPGDAPHTGGKPGGFDVKALRAFRVLRPLRLVSGVPSLHIVVNSIMKALVPLLHIALLVLFVIIIYAIIGLELFLGRMHKTCYFLGSDMEAEEDPSPCASSGSGRSCTLNHTECRGRWPGPNGGITNFDNFFFAMLTVFQCITMEGWTDVLYWMQDAMGYELPWVYFVSLVIFGSFFVLNLVLGVLSGEFSKEREKAKARGDFQKLREKQQMEEDLRGYLDWITQAEELDLHDPSVDGNLASLAEEGRAGHRPQLSELTNRRRGRLRWFSHSTRSTHSTSSHASLPASDTGSMTDTPGDEDEEEGTMASCTRCLNKIMKTRICRHFRRANRGLRARCRRAVKSNACYWAVLLLVFLNTLTIASEHHGQPLWLTQTQEYANKVLLCLFTVEMLLKLYGLGPSVYVASFFNRFDCFVVCGGILETTLVEVGAMQPLGISVLRCVRLLRIFKVTRHWASLSNLVASLLNSMKSIASLLLLLFLFIIIFSLLGMQLFGGKFNFDQTHTKRSTFDTFPQALLTVFQILTGEDWNVVMYDGIMAYGGPFFPGMLVCVYFIILFICGNYILLNVFLAIAVDNLASGDAGTAKDKGREKSSEGNPPKENKVLVPGGENEDAKGARSEGAAPGMEEEEEEEEEEEEEEEEEEENGAGHVELLQEVVPKEKVVPIPEGSAFFCLSQTNPLRKACHTLIHHHIFTSLILVFIILSSVSLAAEDPIRAHSFRNHILGYFDYAFTSIFTVEILLKMTVFGAFLHRGSFCRSWFNLLDLLVVSVSLISFGIHSSAISVVKILRVLRVLRPLRAINRAKGLKHVVQCVFVAIRTIGNIMIVTTLLQFMFACIGVQLFKGKFYSCTDEAKHTLKESKGSFLIYPDGDVSRPLVRERLWVNSDFNFDNVLSAMMALFTVSTFEGWPALLYKAIDANAEDEGPIYNYHVEISVFFIVYIIIIAFFMMNIFVGFVIITFRAQGEQEYQNCELDKNQRQCVEYALKAQPLRRYIPKNPHQYRVWATVNSRAFEYLMFLLILLNTVALAMQHYEQTAPFNYAMDILNMVFTGLFTIEMVLKIIAFKPKHYFADAWNTFDALIVVGSVVDIAVTEVNNGGHLGESSEDTSRISITFFRLFRVMRLVKLLSKGEGIRTLLWTFIKSFQALPYVALLIAMIFFIYAVIGMQMFGLVALQDGTQINRNNNFQTFPQAVLLLFRCATGEAWQEIMLASLPGNRCDPESDFGPGEEFTCGSSFAIVYFISFFMLCAFLIINLFVAVIMDNFDYLTRDWSILGPHHLDEFKRIWSEYDPGAKGRIKHLDVVALLRRIQPPLGFGKLCPHRVACKRLVAMNVPLNSDGTVTFNATLFALVRTSLKIKTEGNLDQANQELRMVIKKIWKRIKQKLLDEVIPPPDEEEVTVGKFYATFLIQDYFRKFRRRKEKGLLGREAPTSTSSALQAGLRSLQDLGPEIRQALTYVTEEEEEEEEAVGQEAEEEEAENNPEPYKDSIDSQPQSRWNSRISVSLPVKEKLPDSLSTGPSDDDGLAPNSRQPSVIQAGSQPHRRSSGVFMFTIPEEGSIQLKGTQGQDNQNEEQELPDWTPDLDRAGRDSFEPSPFTTSLVQQHVNGHMSTPTFAAPHACRSEPSFTIQCLQRLGSCEDLPIPGTYHRGRTSGPSRAQGSWAAPPQKGRLLYAPLLLVEESTVGEGYLGKLGGPLRTFTCLQVPGAHPNPSHRKRGSADSLVEAVLISEGLGLFAQDPRFVALAKQEIADACHLTLDEMDSAASDLLAQRTISLYSDEESILSRFDEEDLGDEMACVHAL.

Over residues M1–T11 the composition is skewed to basic and acidic residues. Residues M1–K56 form a disordered region. Topologically, residues M1–K92 are cytoplasmic. The I repeat unit spans residues N79–F375. Residues P93 to V111 form a helical membrane-spanning segment. Over Y112–Q129 the chain is Extracellular. Residues V130 to Y149 form a helical membrane-spanning segment. Residues G150–N161 lie on the Cytoplasmic side of the membrane. Residues G162–L180 traverse the membrane as a helical segment. At E181 to D201 the chain is on the extracellular side. Residues V202–V220 form a helical membrane-spanning segment. Residues P221–H239 lie on the Cytoplasmic side of the membrane. The helical transmembrane segment at I240 to F259 threads the bilayer. Topologically, residues L260–L347 are extracellular. N-linked (GlcNAc...) asparagine glycosylation is present at N295. A Ca(2+)-binding site is contributed by E330. A helical membrane pass occupies residues P348–S372. Residues G373 to N529 lie on the Cytoplasmic side of the membrane. Positions Q395–E412 are binding to the beta subunit. Low complexity predominate over residues S455–S469. The disordered stretch occupies residues S455–G490. Residues N515–L761 form an II repeat. Residues A530–E549 form a helical membrane-spanning segment. Over H550–A564 the chain is Extracellular. A helical transmembrane segment spans residues N565–L583. At G584–S591 the chain is on the cytoplasmic side. Residues F592–L610 form a helical membrane-spanning segment. Residues V611–G620 are Extracellular-facing. Residues I621 to W639 traverse the membrane as a helical segment. At A640–S658 the chain is on the cytoplasmic side. Residues L659–G679 traverse the membrane as a helical segment. Topologically, residues G680–L733 are extracellular. E711 lines the Ca(2+) pocket. Residues V734–V758 traverse the membrane as a helical segment. Topologically, residues D759 to H876 are cytoplasmic. Residues A766–H834 are disordered. Positions T768 to K787 are enriched in basic and acidic residues. Over residues M810 to N830 the composition is skewed to acidic residues. The III repeat unit spans residues C858–F1140. The helical transmembrane segment at I877–A895 threads the bilayer. The Extracellular segment spans residues E896 to Y911. A helical transmembrane segment spans residues F912–F931. Residues G932–S943 lie on the Cytoplasmic side of the membrane. A helical transmembrane segment spans residues W944–I962. Residues H963 to S968 are Extracellular-facing. Residues V969–A988 form a helical membrane-spanning segment. Residues K989 to N1007 are Cytoplasmic-facing. A helical membrane pass occupies residues I1008–F1027. Residues K1028 to E1117 lie on the Extracellular side of the membrane. The segment at R1065–N1155 is dihydropyridine binding. Ca(2+) is bound at residue E1091. Residues I1118–V1138 traverse the membrane as a helical segment. Over G1139 to R1195 the chain is Cytoplasmic. An IV repeat occupies N1182–F1449. The helical transmembrane segment at A1196–M1214 threads the bilayer. At Q1215–I1229 the chain is on the extracellular side. A helical transmembrane segment spans residues L1230–F1249. The Cytoplasmic portion of the chain corresponds to K1250–A1256. Residues D1257–E1278 traverse the membrane as a helical segment. The Extracellular portion of the chain corresponds to V1279–I1295. A helical membrane pass occupies residues S1296–G1315. Over E1316–Y1334 the chain is Cytoplasmic. A helical transmembrane segment spans residues V1335–F1354. Residues G1355 to F1421 lie on the Extracellular side of the membrane. A dihydropyridine binding region spans residues R1402–K1468. A phenylalkylamine binding region spans residues E1414 to S1457. A helical transmembrane segment spans residues A1422–M1446. At D1447 to V1982 the chain is on the cytoplasmic side. 2 disordered regions span residues V1643–R1729 and L1746–P1778. Residues T1644–N1665 are compositionally biased toward acidic residues. Composition is skewed to polar residues over residues D1675–S1687 and N1713–S1724. Positions D1767–F1776 are enriched in basic and acidic residues.

This sequence belongs to the calcium channel alpha-1 subunit (TC 1.A.1.11) family. CACNA1F subfamily. As to quaternary structure, voltage-dependent calcium channels are multisubunit complexes, consisting of alpha-1, alpha-2, beta and delta subunits in a 1:1:1:1 ratio. The channel activity is directed by the pore-forming and voltage-sensitive alpha-1 subunit. In many cases, this subunit is sufficient to generate voltage-sensitive calcium channel activity. The auxiliary subunits beta and alpha-2/delta linked by a disulfide bridge regulate the channel activity. Interacts (via IQ domain) with CABP4; in a calcium independent manner. As to expression, expressed in the inner and outer nuclear layers and the genglion cell layer of the retina.

The protein localises to the membrane. The enzyme catalyses Ca(2+)(in) = Ca(2+)(out). In terms of biological role, voltage-sensitive calcium channels (VSCC) mediate the entry of calcium ions into excitable cells and are also involved in a variety of calcium-dependent processes, including muscle contraction, hormone or neurotransmitter release, gene expression, cell motility, cell division and cell death. The isoform alpha-1F gives rise to L-type calcium currents. Long-lasting (L-type) calcium channels belong to the 'high-voltage activated' (HVA) group. They are blocked by dihydropyridines (DHP), phenylalkylamines, and by benzothiazepines. Activates at more negative voltages and does not undergo calcium-dependent inactivation (CDI), due to incoming calcium ions, during depolarization. This chain is Voltage-dependent L-type calcium channel subunit alpha-1F, found in Mus musculus (Mouse).